The chain runs to 417 residues: Serine hydroxymethyltransferase (417 aa).

Residues L122 and 126 to 128 contribute to the (6S)-5,6,7,8-tetrahydrofolate site; that span reads GHL. Residue K230 is modified to N6-(pyridoxal phosphate)lysine. 355–357 contributes to the (6S)-5,6,7,8-tetrahydrofolate binding site; that stretch reads SPF.

It belongs to the SHMT family. As to quaternary structure, homodimer. Requires pyridoxal 5'-phosphate as cofactor.

Its subcellular location is the cytoplasm. It carries out the reaction (6R)-5,10-methylene-5,6,7,8-tetrahydrofolate + glycine + H2O = (6S)-5,6,7,8-tetrahydrofolate + L-serine. The protein operates within one-carbon metabolism; tetrahydrofolate interconversion. It participates in amino-acid biosynthesis; glycine biosynthesis; glycine from L-serine: step 1/1. Its function is as follows. Catalyzes the reversible interconversion of serine and glycine with tetrahydrofolate (THF) serving as the one-carbon carrier. This reaction serves as the major source of one-carbon groups required for the biosynthesis of purines, thymidylate, methionine, and other important biomolecules. Also exhibits THF-independent aldolase activity toward beta-hydroxyamino acids, producing glycine and aldehydes, via a retro-aldol mechanism. This chain is Serine hydroxymethyltransferase, found in Francisella tularensis subsp. holarctica (strain LVS).